Reading from the N-terminus, the 290-residue chain is MLTPQRSSYTLQFVTKIGKDDLLAEALLCEKTNFTINSVYLGKMICMTVHAVTMTKFTPDKAERAAHYNPQEHIYETCPGDEFYDACEYSLVGGGKLSTSHGRLSPTKTTPHPKSAGVTPPQRVPARPATRAAAPSATPTQPDCVAKQRTSPGVNSIKSGKSLAFSCTPKTPKTPWYGATHLFNKNVFCAAVSRVAAAHASDAASALWDLDPPKTNEDLDRFLKAAAIRILVCEGSKLLEMANATMERSPDGAAAVAPIGYDRRPRLASRRRSIKCKPPADDFFDDTDSR.

Residues 98–112 (STSHGRLSPTKTTPH) are compositionally biased toward polar residues. The interval 98 to 156 (STSHGRLSPTKTTPHPKSAGVTPPQRVPARPATRAAAPSATPTQPDCVAKQRTSPGVNS) is disordered. The span at 118-142 (VTPPQRVPARPATRAAAPSATPTQP) shows a compositional bias: low complexity. Positions 146–149 (AKQR) match the Nuclear localization signal motif. The Nuclear export signal signature appears at 219–231 (LDRFLKAAAIRIL).

This sequence belongs to the alphaherpesvirinae VP22 tegument protein family. Interacts with gE (via C-terminus); this interaction is necessary for the recruitment of VP22 to the Golgi and its packaging into virions. Interacts with gM (via C-terminus). Interacts with VP16; this interaction allows the formation of a tripartite complex composed of VP16, VP22 and UL41/VHS. Interacts with the capsid-binding protein UL16. Interacts with host CGAS. Post-translationally, highly phosphorylated in the host cell. Packaging is selective for underphosphorylated forms.

Its subcellular location is the virion tegument. It is found in the host cytoplasm. The protein resides in the host nucleus. The protein localises to the host Golgi apparatus. Functionally, tegument protein that plays different roles during the time course of infection. Participates in both the accumulation of viral mRNAs and viral protein translation at late time of infection. Modulates the RNase activity of the virion host shutoff protein UL41 probably to ensure necessary levels of key cellular mRNAs and proteins. Plays a role in microtubule reorganization that occurs after viral infection by stabilizing microtubule network. Plays a role in the inhibition of host innate immune system by targeting the CGAS enzymatic activity which is the principal cytosolic DNA sensor that detects invading viral DNA. Acts by mediating disruption of liquid-like droplets in which CGAS is activated, thereby preventing CGAS activity. This Equus caballus (Horse) protein is Tegument protein VP22 (11).